A 346-amino-acid polypeptide reads, in one-letter code: Anthranilate phosphoribosyltransferase (346 aa).

Residues glycine 80, 83–84 (GD), threonine 88, 90–93 (NIST), 108–116 (KHGNTAVSS), and serine 120 each bind 5-phospho-alpha-D-ribose 1-diphosphate. Glycine 80 is an anthranilate binding site. Serine 92 contacts Mg(2+). Asparagine 111 contributes to the anthranilate binding site. Anthranilate is bound at residue arginine 166. Residues aspartate 225 and glutamate 226 each contribute to the Mg(2+) site.

This sequence belongs to the anthranilate phosphoribosyltransferase family. In terms of assembly, homodimer. Mg(2+) serves as cofactor.

It carries out the reaction N-(5-phospho-beta-D-ribosyl)anthranilate + diphosphate = 5-phospho-alpha-D-ribose 1-diphosphate + anthranilate. Its pathway is amino-acid biosynthesis; L-tryptophan biosynthesis; L-tryptophan from chorismate: step 2/5. Functionally, catalyzes the transfer of the phosphoribosyl group of 5-phosphorylribose-1-pyrophosphate (PRPP) to anthranilate to yield N-(5'-phosphoribosyl)-anthranilate (PRA). The polypeptide is Anthranilate phosphoribosyltransferase (Desulforudis audaxviator (strain MP104C)).